The chain runs to 279 residues: MDTELLKTFLEVSRTRHFGRAAESLYLTQSAVSFRIRQLENQLGVNLFTRHRNNIRLTAAGEKLLPYAETLMSTWQAARKEVAHTSRHNEFSIGASASLWECMLNQWLGRLYQNQDVHTGLQFEARIAQRQSLVKQLHERQLDLLITTEAPKMDEFCSQLLGYFTLALYTSAPSKLKGDLNYLRLEWGPDFQQHEAGLIGADEVPILTTSSAELAQQQIAMLNGCTWLPVSWARKKGGLHTVVDSTTLSRPLYAIWLQNSDKNALIRDLLKINVLDEVY.

The HTH lysR-type domain occupies 1 to 58; sequence MDTELLKTFLEVSRTRHFGRAAESLYLTQSAVSFRIRQLENQLGVNLFTRHRNNIRLT. A DNA-binding region (H-T-H motif) is located at residues 18 to 37; it reads FGRAAESLYLTQSAVSFRIR.

The protein belongs to the LysR transcriptional regulatory family.

Functionally, negatively regulates the transcription of the flagellar master operon flhDC by binding to the upstream region of the operon. The polypeptide is HTH-type transcriptional regulator HdfR (Escherichia coli O6:K15:H31 (strain 536 / UPEC)).